The sequence spans 217 residues: UPF0502 protein KPN78578_10500 (217 aa).

It belongs to the UPF0502 family.

The polypeptide is UPF0502 protein KPN78578_10500 (Klebsiella pneumoniae subsp. pneumoniae (strain ATCC 700721 / MGH 78578)).